A 350-amino-acid chain; its full sequence is 3-dehydroquinate synthase (350 aa).

NAD(+) is bound by residues 63–68 (DGEEYK), 97–101 (GVIGD), 121–122 (TT), Lys-134, Lys-143, and 161–164 (FLKT). Zn(2+)-binding residues include Glu-176, His-235, and His-252.

It belongs to the sugar phosphate cyclases superfamily. Dehydroquinate synthase family. Co(2+) serves as cofactor. It depends on Zn(2+) as a cofactor. The cofactor is NAD(+).

The protein localises to the cytoplasm. The enzyme catalyses 7-phospho-2-dehydro-3-deoxy-D-arabino-heptonate = 3-dehydroquinate + phosphate. It participates in metabolic intermediate biosynthesis; chorismate biosynthesis; chorismate from D-erythrose 4-phosphate and phosphoenolpyruvate: step 2/7. Functionally, catalyzes the conversion of 3-deoxy-D-arabino-heptulosonate 7-phosphate (DAHP) to dehydroquinate (DHQ). The chain is 3-dehydroquinate synthase from Sulfurovum sp. (strain NBC37-1).